The following is an 848-amino-acid chain: Translation initiation factor IF-2 (848 aa).

The tract at residues 1–265 is disordered; the sequence is MSDTDGKKPL…GNQRAEKQVR (265 aa). Residues 89 to 162 show a composition bias toward basic and acidic residues; it reads KAREVEEAAQ…AEIAKPKTEA (74 aa). Positions 163–179 are enriched in low complexity; that stretch reads RPATPADRAAAEAAAVR. Basic and acidic residues predominate over residues 191–219; that stretch reads RKTDRDRDTRGGGGDDRDSRNKGRDDSRR. A tr-type G domain is found at 346–514; the sequence is PRAPIITIMG…AIALQAEILE (169 aa). Residues 355–362 are G1; the sequence is GHVDHGKT. 355–362 is a GTP binding site; sequence GHVDHGKT. A G2 region spans residues 380–384; that stretch reads GITQH. Positions 402 to 405 are G3; that stretch reads DTPG. GTP-binding positions include 402 to 406 and 456 to 459; these read DTPGH and NKID. Residues 456–459 are G4; sequence NKID. A G5 region spans residues 492 to 494; that stretch reads SAK.

This sequence belongs to the TRAFAC class translation factor GTPase superfamily. Classic translation factor GTPase family. IF-2 subfamily.

It localises to the cytoplasm. Functionally, one of the essential components for the initiation of protein synthesis. Protects formylmethionyl-tRNA from spontaneous hydrolysis and promotes its binding to the 30S ribosomal subunits. Also involved in the hydrolysis of GTP during the formation of the 70S ribosomal complex. The sequence is that of Translation initiation factor IF-2 from Paracoccus denitrificans (strain Pd 1222).